Consider the following 33-residue polypeptide: Dermaseptin-H9 (33 aa).

Leu-33 is modified (leucine amide).

The protein belongs to the frog skin active peptide (FSAP) family. Dermaseptin subfamily. Expressed by the skin glands.

The protein localises to the secreted. Its function is as follows. Has antimicrobial activity. The polypeptide is Dermaseptin-H9 (Pithecopus hypochondrialis (Orange-legged leaf frog)).